The chain runs to 657 residues: Transcription factor 12 (657 aa).

Over residues 1–20 the composition is skewed to polar residues; the sequence is MDEKGGTTSWGTSGQPSPSY. 5 disordered regions span residues 1 to 76, 89 to 285, 297 to 340, 459 to 555, and 628 to 657; these read MDEK…SGLS, LGSP…QTGD, PDHT…YENS, VSAQ…ERRM, and KVSAVSAEPPTPHPGSHPGLSETTNPMGHM. The span at 30–43 shows a compositional bias: basic and acidic residues; it reads HYSDHLNDSRKGTH. 2 stretches are compositionally biased toward polar residues: residues 49 to 70 and 93 to 112; these read TPFSNSNLIGKTSGRGSFSLYS and AQLSSSGKPETPYYSFSATS. The interval 68 to 89 is leucine-zipper; it reads LYSRDSGLSGCQSSLLRQELGL. A Nuclear localization signal motif is present at residues 130–136; the sequence is KKVRKVP. Composition is skewed to polar residues over residues 168–193, 202–216, and 230–254; these read MFASTFFMQDGTHSSSDLWSSSNGMS, GTSTSHMSQSGSYGS, and VSPTDINTSLPPMSSFHRGSTSSSP. Residues 300–311 are compositionally biased toward low complexity; that stretch reads TSSSFPSNPSTP. Residues 312–340 are compositionally biased toward polar residues; sequence VGSPSPLTGASQWSRSGGQAPSSPNYENS. Basic and acidic residues-rich tracts occupy residues 493–505, 511–526, and 543–555; these read IKSEHKEKDENIH, DDMKSDDESSQKDIKV, and PEQKIEREKERRM. The bHLH domain maps to 552–605; it reads ERRMANNARERLRVRDINEAFKELGRMCQLHLKSEKPQTKLLILHQAVAVILSL. The interval 607–630 is class A specific domain; the sequence is QQVRERNLNPKAACLKRREEEKVS. Residues 648 to 657 are compositionally biased toward polar residues; it reads SETTNPMGHM.

As to quaternary structure, efficient DNA binding requires dimerization with another bHLH protein. Forms homo- or heterooligomers with myogenin, E12 and ITF2 proteins.

It localises to the nucleus. Its function is as follows. Transcriptional regulator. Involved in the initiation of neuronal differentiation. Activates transcription by binding to the E box-containing promoter. The polypeptide is Transcription factor 12 (TCF12) (Gallus gallus (Chicken)).